We begin with the raw amino-acid sequence, 202 residues long: Probable GTP-binding protein EngB (202 aa).

The 176-residue stretch at Val22–Glu197 folds into the EngB-type G domain. Residues Gly30–Ser37, Gly57–Leu61, Asp75–Gly78, Thr142–Asp145, and Tyr173–Ser178 contribute to the GTP site. Residues Ser37 and Thr59 each contribute to the Mg(2+) site.

This sequence belongs to the TRAFAC class TrmE-Era-EngA-EngB-Septin-like GTPase superfamily. EngB GTPase family. Requires Mg(2+) as cofactor.

Functionally, necessary for normal cell division and for the maintenance of normal septation. The sequence is that of Probable GTP-binding protein EngB from Bacteroides thetaiotaomicron (strain ATCC 29148 / DSM 2079 / JCM 5827 / CCUG 10774 / NCTC 10582 / VPI-5482 / E50).